The primary structure comprises 99 residues: Large ribosomal subunit protein uL23cz/uL23cy (99 aa).

Residues 1 to 37 (MGGVENPVSTDKAIRLPERKQYSSNAEPNPSKTEVKR) form a disordered region. Over residues 12-21 (KAIRLPERKQ) the composition is skewed to basic and acidic residues. Polar residues predominate over residues 22–32 (YSSNAEPNPSK).

The protein belongs to the universal ribosomal protein uL23 family. As to quaternary structure, part of the 50S ribosomal subunit.

Its subcellular location is the plastid. The protein localises to the chloroplast. Functionally, binds to 23S rRNA. This is Large ribosomal subunit protein uL23cz/uL23cy (rpl23-A) from Selaginella uncinata (Blue spike-moss).